The chain runs to 403 residues: S-adenosylmethionine synthase (403 aa).

Histidine 15 lines the ATP pocket. Residue aspartate 17 coordinates Mg(2+). Glutamate 43 contacts K(+). Positions 56 and 99 each coordinate L-methionine. A flexible loop region spans residues 99 to 109; sequence QSPDINQGVDR. ATP-binding positions include 166–168, 232–233, aspartate 241, 247–248, alanine 264, and lysine 268; these read DAK, KF, and RK. Residue aspartate 241 coordinates L-methionine. L-methionine is bound at residue lysine 272.

This sequence belongs to the AdoMet synthase family. As to quaternary structure, homotetramer; dimer of dimers. Mg(2+) serves as cofactor. K(+) is required as a cofactor.

It is found in the cytoplasm. The catalysed reaction is L-methionine + ATP + H2O = S-adenosyl-L-methionine + phosphate + diphosphate. Its pathway is amino-acid biosynthesis; S-adenosyl-L-methionine biosynthesis; S-adenosyl-L-methionine from L-methionine: step 1/1. In terms of biological role, catalyzes the formation of S-adenosylmethionine (AdoMet) from methionine and ATP. The overall synthetic reaction is composed of two sequential steps, AdoMet formation and the subsequent tripolyphosphate hydrolysis which occurs prior to release of AdoMet from the enzyme. The polypeptide is S-adenosylmethionine synthase (Xylella fastidiosa (strain M12)).